We begin with the raw amino-acid sequence, 995 residues long: MDFEKRKAATLASIRSSVTDKSPKGFLDEPIIPLLETINHHPSYFTTSSCSGRISILSQPKPKSNDSTKKKARGGSWLYITHDPADSDLVISLLFPSKSNQIDPIDQPSELVFRFEPLIIAVECKDLGSAQFLVALAISAGFRESGITSCGDGKRVIIAIRCSIRMEVPIGDTEKLMVSPEYVKFLVDIANEKMDANRKRTDGFSVALASNGFKNPDENDVDEDDNYENLAANHDSSINNGNLYPGVQKELIPLEKLSIVGEPVEKLHLWGHSACTIDESDRKEVIVFGGFGGFGRHARRNESLLLNPSCGTLKLIAVNESPSARLGHTASMVGDFMFVIGGRADPLNILNDVWRLDISTGEWSSQRCVGSEFPPRHRHAAASVGTKVYIFGGLYNDKIVSSMHILDTKDLQWKEVEQQGQWPCARHSHAMVAYGSQSFMFGGYNGENVLNDLYSFDVQSCSWKLEVISGKWPHARFSHSMFVYKHTIGIIGGCPVSQNCQELTLLDLKHRLWRSVRLEFMNKELFVRSTASILGDDLIVIGGGAACYAFGTKFSEPVKINLVQSVTMSENHLPPQPEDVSLESNKNNADLKTETSLSQPWVIQLERKYAKFGKDILKSFGWLDLERKVYSNEKGLCICFPVTENFSELFHEKQLLGKDFERSEENNLTKGLSLKDISCSAALNLLKEHGAKKLINVAFEAKKVAKSPLQRMREDITSILKQKGLPEELLDELPQKWERLGDIVVVPATSFKDPTWSSINDEVWCAVSKSLSANRLARQGRVEPNGTRDSTLEILVGDNGWVNHRENGILYSFDATKCMFSWGNLSEKLRMGNMACENEVVVDLFAGIGYFVLPFLVRAKAKLVYACEWNPHAIEALRRNVEANSVSERCIILEGDNRITAPKGVADRVNLGLIPSSEGSWVTAIQALRPEGGILHVHGNVKDSDESSWGEHVTKTLSDIARAEGRSWEVTVEHIEKVKWYAPRIRHLVADVRCR.

The segment at 1 to 212 (MDFEKRKAAT…GFSVALASNG (212 aa)) is tRNA wybutosine-synthesizing protein 3 homolog. Kelch repeat units lie at residues 284–335 (EVIV…MVGD), 336–386 (FMFV…SVGT), 387–436 (KVYI…AYGS), 437–486 (QSFM…VYKH), and 488–535 (IGII…SILG). The segment at 661–995 (ERSEENNLTK…RHLVADVRCR (335 aa)) is tRNA wybutosine-synthesizing protein 2 homolog. Residues lysine 828 and 896 to 897 (DN) each bind S-adenosyl-L-methionine.

This sequence in the C-terminal section; belongs to the class I-like SAM-binding methyltransferase superfamily. TRM5/TYW2 family. In the N-terminal section; belongs to the TYW3 family.

It catalyses the reaction 4-demethyl-7-[(3S)-3-amino-3-carboxypropyl]wyosine(37) in tRNA(Phe) + S-adenosyl-L-methionine = 7-[(3S)-3-amino-3-carboxypropyl]wyosine(37) in tRNA(Phe) + S-adenosyl-L-homocysteine + H(+). It carries out the reaction 4-demethylwyosine(37) in tRNA(Phe) + S-adenosyl-L-methionine = 4-demethyl-7-[(3S)-3-amino-3-carboxypropyl]wyosine(37) in tRNA(Phe) + S-methyl-5'-thioadenosine + H(+). The protein operates within tRNA modification; wybutosine-tRNA(Phe) biosynthesis. In terms of biological role, S-adenosyl-L-methionine-dependent transferase that acts as a component of the wybutosine biosynthesis pathway. Wybutosine is a hyper modified guanosine with a tricyclic base found at the 3'-position adjacent to the anticodon of eukaryotic phenylalanine tRNA. This Arabidopsis thaliana (Mouse-ear cress) protein is tRNA wybutosine-synthesizing protein 2/3/4.